The following is a 162-amino-acid chain: Phosphopantetheine adenylyltransferase (162 aa).

S11 lines the substrate pocket. ATP is bound by residues 11 to 12 and H19; that span reads SF. Substrate contacts are provided by K43, V76, and R90. Residues 91–93, E101, and 126–132 contribute to the ATP site; these read GLR and HLYISSS.

Belongs to the bacterial CoaD family. In terms of assembly, homohexamer. Mg(2+) is required as a cofactor.

The protein localises to the cytoplasm. It carries out the reaction (R)-4'-phosphopantetheine + ATP + H(+) = 3'-dephospho-CoA + diphosphate. It participates in cofactor biosynthesis; coenzyme A biosynthesis; CoA from (R)-pantothenate: step 4/5. Functionally, reversibly transfers an adenylyl group from ATP to 4'-phosphopantetheine, yielding dephospho-CoA (dPCoA) and pyrophosphate. The chain is Phosphopantetheine adenylyltransferase from Streptococcus pneumoniae (strain ATCC 700669 / Spain 23F-1).